Reading from the N-terminus, the 275-residue chain is Thymidylate synthase (275 aa).

138–139 (RR) contacts dUMP. Cysteine 158 acts as the Nucleophile in catalysis. Residues 178–181 (RSCD), asparagine 189, and 219–221 (HIY) each bind dUMP. Aspartate 181 provides a ligand contact to (6R)-5,10-methylene-5,6,7,8-tetrahydrofolate. Residue alanine 274 coordinates (6R)-5,10-methylene-5,6,7,8-tetrahydrofolate.

This sequence belongs to the thymidylate synthase family. Bacterial-type ThyA subfamily. In terms of assembly, homodimer.

The protein resides in the cytoplasm. The enzyme catalyses dUMP + (6R)-5,10-methylene-5,6,7,8-tetrahydrofolate = 7,8-dihydrofolate + dTMP. The protein operates within pyrimidine metabolism; dTTP biosynthesis. In terms of biological role, catalyzes the reductive methylation of 2'-deoxyuridine-5'-monophosphate (dUMP) to 2'-deoxythymidine-5'-monophosphate (dTMP) while utilizing 5,10-methylenetetrahydrofolate (mTHF) as the methyl donor and reductant in the reaction, yielding dihydrofolate (DHF) as a by-product. This enzymatic reaction provides an intracellular de novo source of dTMP, an essential precursor for DNA biosynthesis. The sequence is that of Thymidylate synthase from Fusobacterium nucleatum subsp. nucleatum (strain ATCC 25586 / DSM 15643 / BCRC 10681 / CIP 101130 / JCM 8532 / KCTC 2640 / LMG 13131 / VPI 4355).